The sequence spans 337 residues: MNDLKSIIGKVATGAPLSREEAASAFDSMMSGEATPSQMGALLMALRVRGETVEEITGAVSVMRAKMLRVDAPAGAVDIVGTGGDGSGSVNVSTCAAFIVAGAGIPVAKHGNRALSSRSGAADVLAALGVKIDLKPDQVGRCVQEAGIGFMFAPAHHPAMKNVGPTRVELATRTIFNLLGPLSNPAGVKHQMVGVFSRQWVEPLAQVLKNLGSKAAWVVHGSDGLDEITLTGPTFVAALEHGQIRTFEVTPEQAGLGLCGSDGLKGGDAAANAVALQSVLDGMPSPYRDVALLNAAAALVVAGRAKTLAEGVAIGRDALDSGAAAARLKHLIAVSNS.

5-phospho-alpha-D-ribose 1-diphosphate-binding positions include Gly-81, 84-85, Ser-89, 91-94, 109-117, and Ala-121; these read GD, NVST, and KHGNRALSS. Gly-81 contacts anthranilate. Ser-93 provides a ligand contact to Mg(2+). Anthranilate is bound at residue Asn-112. An anthranilate-binding site is contributed by Arg-167. Residues Asp-226 and Glu-227 each coordinate Mg(2+).

The protein belongs to the anthranilate phosphoribosyltransferase family. In terms of assembly, homodimer. The cofactor is Mg(2+).

The catalysed reaction is N-(5-phospho-beta-D-ribosyl)anthranilate + diphosphate = 5-phospho-alpha-D-ribose 1-diphosphate + anthranilate. Its pathway is amino-acid biosynthesis; L-tryptophan biosynthesis; L-tryptophan from chorismate: step 2/5. In terms of biological role, catalyzes the transfer of the phosphoribosyl group of 5-phosphorylribose-1-pyrophosphate (PRPP) to anthranilate to yield N-(5'-phosphoribosyl)-anthranilate (PRA). The protein is Anthranilate phosphoribosyltransferase of Bradyrhizobium sp. (strain BTAi1 / ATCC BAA-1182).